The sequence spans 229 residues: Putative N-acetylmannosamine-6-phosphate 2-epimerase (229 aa).

It belongs to the NanE family.

It catalyses the reaction an N-acyl-D-glucosamine 6-phosphate = an N-acyl-D-mannosamine 6-phosphate. It participates in amino-sugar metabolism; N-acetylneuraminate degradation; D-fructose 6-phosphate from N-acetylneuraminate: step 3/5. In terms of biological role, converts N-acetylmannosamine-6-phosphate (ManNAc-6-P) to N-acetylglucosamine-6-phosphate (GlcNAc-6-P). This chain is Putative N-acetylmannosamine-6-phosphate 2-epimerase, found in Shigella dysenteriae serotype 1 (strain Sd197).